A 1615-amino-acid chain; its full sequence is Regulating synaptic membrane exocytosis protein 1 (1615 aa).

A disordered region spans residues 1-26 (MSSAVGPRGPRPPTVPPPMQELPDLS). Residues 9 to 20 (GPRPPTVPPPMQ) show a composition bias toward pro residues. A RabBD domain is found at 22-205 (LPDLSHLTEE…TKSGAWFFGS (184 aa)). The FYVE-type zinc finger occupies 133–193 (KDDAPTCGIC…VCNLCRKQQE (61 aa)). Zn(2+) contacts are provided by cysteine 139, cysteine 142, cysteine 155, cysteine 158, cysteine 163, cysteine 166, cysteine 185, and cysteine 188. Residues 205–569 (SGPQQPSQDG…CEDVELESES (365 aa)) form a disordered region. Polar residues predominate over residues 206–222 (GPQQPSQDGTLSDTATG). Basic and acidic residues predominate over residues 227–240 (VPREKKARLQERSR). A compositionally biased stretch (polar residues) spans 241 to 256 (SQTPLSTAAVSSQDTA). A compositionally biased stretch (basic and acidic residues) spans 327–379 (ADERERKERRETRRLEKGRSQDYSDRPEKRDNGRVAEDQKQRKEEEYQTRYRS). The segment covering 399–410 (MHARVSRARHER) has biased composition (basic residues). A compositionally biased stretch (low complexity) spans 421–459 (EAAAAAPAEATAGKRAPATARVSPPESPRARAAAAQPPT). Residues 460–475 (EHGPPPPRPAPGPAEP) are compositionally biased toward pro residues. The segment covering 476–489 (PEPRVPEPLRKQGR) has biased composition (basic and acidic residues). Over residues 511-523 (RNDSLSSDQSESV) the composition is skewed to polar residues. Residue serine 514 is modified to Phosphoserine. Residues 529 to 541 (KPHRPKRGGKRRQ) show a composition bias toward basic residues. Acidic residues predominate over residues 559-569 (SCEDVELESES). Serine 592 is modified (phosphoserine). Residues 619-705 (RTTMPKESGA…EPQVEIIVSR (87 aa)) enclose the PDZ domain. Residues 712–746 (RIPESSHPPLESSSSSFESQKMERPSISVISPTSP) are disordered. The segment covering 714-730 (PESSHPPLESSSSSFES) has biased composition (low complexity). 2 positions are modified to phosphoserine: serine 742 and serine 745. The 124-residue stretch at 756–879 (LPGQLSVKLW…ALLDDEPHWY (124 aa)) folds into the C2 1 domain. Positions 884–1201 (HDESSLPLPQ…RQLPQVPVRS (318 aa)) are disordered. Position 895 is a phosphoserine (serine 895). Over residues 949 to 958 (ATTLTVPEQQ) the composition is skewed to polar residues. Serine 991 is subject to Phosphoserine. Residues 1006–1023 (RHHDASRSPADHRSRHVE) are compositionally biased toward basic and acidic residues. Phosphoserine is present on serine 1045. Residues 1078-1092 (SPERERHSRKSERCS) are compositionally biased toward basic and acidic residues. Residues 1173–1187 (QGSPTQSPPADTSFG) show a composition bias toward polar residues. Serine 1175 bears the Phosphoserine mark. At threonine 1177 the chain carries Phosphothreonine. A phosphoserine mark is found at serine 1179, serine 1231, serine 1233, serine 1234, serine 1262, serine 1263, and serine 1265. A disordered region spans residues 1256–1313 (DNASAKSSDSDVSDVSAISRASSTSRLSSTSFMSEQSERPRGRISSFTPKMQGRRMGT). The segment covering 1268–1289 (SDVSAISRASSTSRLSSTSFMS) has biased composition (low complexity). Serine 1339 is modified (phosphoserine). A disordered region spans residues 1368–1397 (RSRSTSQLSQTESGHKKLKSTIQRSTETGM). Residues 1461-1579 (AMGDIQIGME…DLSSMVIGWY (119 aa)) enclose the C2 2 domain. 4 positions are modified to phosphoserine: serine 1600, serine 1603, serine 1606, and serine 1615.

In terms of assembly, interacts with RAB3C, RAB10, RAB26 and RAB37. Binds SNAP25, SYT1 and CACNA1B. Interaction with SYT1 is enhanced by calcium ions. Interaction with SNAP25 is weaker in the presence of calcium ions. Binds RAB3A, RAB3B and RAB3D that have been activated by GTP-binding. Binds UNC13A. Interacts with TSPOAP1 and RIMBP2. Interacts with PPFIA3 and PPFIA4. Interacts with ERC1. Post-translationally, phosphorylated by BRSK1. In terms of tissue distribution, highly expressed in hippocampus, brain cortex, cerebellum and olfactory bulb. Detected at lower levels in midbrain, hindbrain and spinal cord. Detected retina and in spinal cord motor neurons.

It localises to the cell membrane. The protein resides in the synapse. Its subcellular location is the presynaptic cell membrane. Functionally, rab effector involved in exocytosis. May act as scaffold protein that regulates neurotransmitter release at the active zone. Essential for maintaining normal probability of neurotransmitter release and for regulating release during short-term synaptic plasticity. Plays a role in dendrite formation by melanocytes. The sequence is that of Regulating synaptic membrane exocytosis protein 1 (Rims1) from Rattus norvegicus (Rat).